Reading from the N-terminus, the 308-residue chain is ADP-L-glycero-D-manno-heptose-6-epimerase (308 aa).

NADP(+) is bound by residues 10 to 11 (MI), 31 to 32 (DN), K38, K53, 75 to 79 (EGACS), and N92. The Proton acceptor role is filled by Y140. NADP(+) is bound at residue K144. N169 provides a ligand contact to substrate. NADP(+) contacts are provided by V170 and K178. K178 functions as the Proton acceptor in the catalytic mechanism. Residues S180, H187, 201–204 (FEGS), R209, and Y272 each bind substrate.

It belongs to the NAD(P)-dependent epimerase/dehydratase family. HldD subfamily. In terms of assembly, homopentamer. NADP(+) is required as a cofactor.

It carries out the reaction ADP-D-glycero-beta-D-manno-heptose = ADP-L-glycero-beta-D-manno-heptose. It participates in nucleotide-sugar biosynthesis; ADP-L-glycero-beta-D-manno-heptose biosynthesis; ADP-L-glycero-beta-D-manno-heptose from D-glycero-beta-D-manno-heptose 7-phosphate: step 4/4. In terms of biological role, catalyzes the interconversion between ADP-D-glycero-beta-D-manno-heptose and ADP-L-glycero-beta-D-manno-heptose via an epimerization at carbon 6 of the heptose. This chain is ADP-L-glycero-D-manno-heptose-6-epimerase, found in Actinobacillus pleuropneumoniae serotype 5b (strain L20).